We begin with the raw amino-acid sequence, 152 residues long: Superoxide dismutase [Cu-Zn] (152 aa).

3 residues coordinate Cu cation: histidine 45, histidine 47, and histidine 62. Residues cysteine 56 and cysteine 145 are joined by a disulfide bond. Zn(2+) is bound by residues histidine 62, histidine 70, histidine 79, and aspartate 82. Histidine 119 provides a ligand contact to Cu cation.

This sequence belongs to the Cu-Zn superoxide dismutase family. Homodimer. Cu cation serves as cofactor. The cofactor is Zn(2+).

Its subcellular location is the cytoplasm. It carries out the reaction 2 superoxide + 2 H(+) = H2O2 + O2. Its function is as follows. Destroys radicals which are normally produced within the cells and which are toxic to biological systems. This chain is Superoxide dismutase [Cu-Zn] (SODCC), found in Pisum sativum (Garden pea).